The primary structure comprises 422 residues: GTPase Obg (422 aa).

The region spanning 4-161 (LHFVDEAFNE…FKIKTELKVL (158 aa)) is the Obg domain. The region spanning 162–327 (ADIGLLGFPS…LKYEMSSLLQ (166 aa)) is the OBG-type G domain. GTP-binding positions include 168 to 175 (GFPSVGKS), 193 to 197 (FTTIK), 214 to 217 (DLPG), 281 to 284 (NKMD), and 308 to 310 (SLV). Mg(2+)-binding residues include Ser-175 and Thr-195. The OCT domain maps to 345 to 422 (TLPDNQNTIS…KICDRLFYFL (78 aa)).

Belongs to the TRAFAC class OBG-HflX-like GTPase superfamily. OBG GTPase family. In terms of assembly, monomer. The cofactor is Mg(2+).

It is found in the cytoplasm. Functionally, an essential GTPase which binds GTP, GDP and possibly (p)ppGpp with moderate affinity, with high nucleotide exchange rates and a fairly low GTP hydrolysis rate. Plays a role in control of the cell cycle, stress response, ribosome biogenesis and in those bacteria that undergo differentiation, in morphogenesis control. The polypeptide is GTPase Obg (Onion yellows phytoplasma (strain OY-M)).